A 403-amino-acid polypeptide reads, in one-letter code: MLKCGMTGGQVKVFGKAVQTLSRVSDELWLDPSEKGLALRSVNSCHSTYGYVLFSSMFFQHYQWSPFATMSDTDLPLNLNCKLAIKSVLPIFRCLNYLERSVEKCTVVARADKCRVVIQFFGKHGIKRTHNVYFQDSQPLKIIFEKSLCANILMIKPRLLTEAIALLTSNQEEVTFSVTPGNFCLKSLSGELLDLTSSVYSEMSFGPEEFDFFQVGLDTEITFCFKELKGILTFSEVMHAPLAIYFDFPGKPVVLSVEDMLLEANFILATLVDYPSRTSSPQLLPLSQARRSHPIQSSAPEDKSRVSQTPESISRAAPKRLFPKDSPDSSSAAETKRASAGQDDIFEVPESVVSDMEEERSPSHLRKFSCMFFGAVSCEQQEYAGHPLDSLAVASDSEEDVSG.

The segment at 285–347 (PLSQARRSHP…ASAGQDDIFE (63 aa)) is disordered. Residues serine 354 and serine 363 each carry the phosphoserine modification.

Belongs to the rad9 family. Interacts with HUS1, HUS1B, RAD1, RAD9A and RAD17.

This Mus musculus (Mouse) protein is Cell cycle checkpoint control protein RAD9B (Rad9b).